The primary structure comprises 283 residues: Protein/nucleic acid deglycase HchA (283 aa).

H86, E91, and H123 together coordinate Zn(2+). Residue C185 is the Nucleophile of the active site.

It belongs to the peptidase C56 family. HchA subfamily. In terms of assembly, homodimer.

It is found in the cytoplasm. It catalyses the reaction N(omega)-(1-hydroxy-2-oxopropyl)-L-arginyl-[protein] + H2O = lactate + L-arginyl-[protein] + H(+). The enzyme catalyses N(6)-(1-hydroxy-2-oxopropyl)-L-lysyl-[protein] + H2O = lactate + L-lysyl-[protein] + H(+). It carries out the reaction S-(1-hydroxy-2-oxopropyl)-L-cysteinyl-[protein] + H2O = lactate + L-cysteinyl-[protein] + H(+). The catalysed reaction is N(omega)-(1-hydroxy-2-oxoethyl)-L-arginyl-[protein] + H2O = L-arginyl-[protein] + glycolate + H(+). It catalyses the reaction N(6)-(1-hydroxy-2-oxoethyl)-L-lysyl-[protein] + H2O = glycolate + L-lysyl-[protein] + H(+). The enzyme catalyses S-(1-hydroxy-2-oxoethyl)-L-cysteinyl-[protein] + H2O = glycolate + L-cysteinyl-[protein] + H(+). It carries out the reaction N(2)-(1-hydroxy-2-oxopropyl)-dGTP + H2O = lactate + dGTP + H(+). The catalysed reaction is N(2)-(1-hydroxy-2-oxopropyl)-GTP + H2O = lactate + GTP + H(+). It catalyses the reaction N(2)-(1-hydroxy-2-oxopropyl)-GDP + H2O = lactate + GDP + H(+). The enzyme catalyses N(2)-(1-hydroxy-2-oxopropyl)-GMP + H2O = lactate + GMP + H(+). It carries out the reaction N(2)-(1-hydroxy-2-oxoethyl)-dGTP + H2O = dGTP + glycolate + H(+). The catalysed reaction is N(2)-(1-hydroxy-2-oxoethyl)-GTP + H2O = glycolate + GTP + H(+). It catalyses the reaction N(2)-(1-hydroxy-2-oxoethyl)-GDP + H2O = glycolate + GDP + H(+). The enzyme catalyses N(2)-(1-hydroxy-2-oxoethyl)-GMP + H2O = glycolate + GMP + H(+). It carries out the reaction an N(2)-(1-hydroxy-2-oxopropyl)-guanosine in RNA + H2O = a guanosine in RNA + lactate + H(+). The catalysed reaction is an N(2)-(1-hydroxy-2-oxopropyl)-2'-deoxyguanosine in DNA + H2O = a 2'-deoxyguanosine in DNA + lactate + H(+). It catalyses the reaction an N(2)-(1-hydroxy-2-oxoethyl)-guanosine in RNA + H2O = a guanosine in RNA + glycolate + H(+). The enzyme catalyses an N(2)-(1-hydroxy-2-oxoethyl)-2'-deoxyguanosine in DNA + H2O = a 2'-deoxyguanosine in DNA + glycolate + H(+). Its function is as follows. Protein and nucleotide deglycase that catalyzes the deglycation of the Maillard adducts formed between amino groups of proteins or nucleotides and reactive carbonyl groups of glyoxals. Thus, functions as a protein deglycase that repairs methylglyoxal- and glyoxal-glycated proteins, and releases repaired proteins and lactate or glycolate, respectively. Deglycates cysteine, arginine and lysine residues in proteins, and thus reactivates these proteins by reversing glycation by glyoxals. Acts on early glycation intermediates (hemithioacetals and aminocarbinols), preventing the formation of Schiff bases and advanced glycation endproducts (AGE). Also functions as a nucleotide deglycase able to repair glycated guanine in the free nucleotide pool (GTP, GDP, GMP, dGTP) and in DNA and RNA. Is thus involved in a major nucleotide repair system named guanine glycation repair (GG repair), dedicated to reversing methylglyoxal and glyoxal damage via nucleotide sanitization and direct nucleic acid repair. Plays an important role in protecting cells from carbonyl stress. This chain is Protein/nucleic acid deglycase HchA, found in Escherichia coli O139:H28 (strain E24377A / ETEC).